The following is a 201-amino-acid chain: Small ribosomal subunit protein uS4 (201 aa).

Residues 26-46 (LARRAYAPGDHGRDRRGKLSE) are disordered. Residues 35 to 44 (DHGRDRRGKL) are compositionally biased toward basic and acidic residues. The S4 RNA-binding domain occupies 93–156 (RRLDNMVYRL…KNLDIIKNAV (64 aa)).

It belongs to the universal ribosomal protein uS4 family. Part of the 30S ribosomal subunit. Contacts protein S5. The interaction surface between S4 and S5 is involved in control of translational fidelity.

Functionally, one of the primary rRNA binding proteins, it binds directly to 16S rRNA where it nucleates assembly of the body of the 30S subunit. Its function is as follows. With S5 and S12 plays an important role in translational accuracy. The sequence is that of Small ribosomal subunit protein uS4 from Limosilactobacillus reuteri (strain DSM 20016) (Lactobacillus reuteri).